We begin with the raw amino-acid sequence, 150 residues long: D-aminoacyl-tRNA deacylase (150 aa).

The short motif at 138–139 is the Gly-cisPro motif, important for rejection of L-amino acids element; the sequence is GP.

Belongs to the DTD family. As to quaternary structure, homodimer.

It is found in the cytoplasm. It carries out the reaction glycyl-tRNA(Ala) + H2O = tRNA(Ala) + glycine + H(+). The enzyme catalyses a D-aminoacyl-tRNA + H2O = a tRNA + a D-alpha-amino acid + H(+). In terms of biological role, an aminoacyl-tRNA editing enzyme that deacylates mischarged D-aminoacyl-tRNAs. Also deacylates mischarged glycyl-tRNA(Ala), protecting cells against glycine mischarging by AlaRS. Acts via tRNA-based rather than protein-based catalysis; rejects L-amino acids rather than detecting D-amino acids in the active site. By recycling D-aminoacyl-tRNA to D-amino acids and free tRNA molecules, this enzyme counteracts the toxicity associated with the formation of D-aminoacyl-tRNA entities in vivo and helps enforce protein L-homochirality. The polypeptide is D-aminoacyl-tRNA deacylase (Chlorobium phaeobacteroides (strain DSM 266 / SMG 266 / 2430)).